A 292-amino-acid polypeptide reads, in one-letter code: MDFGHVLTAMVTPFDAKGNVDLEKVERLVEFLLANGTEGLVVAGTTGESPTLREEEKLALFEKVVTVVNKRVPVIAGTGSNNTYVSAQLTKKATALGVDGIMAVTPYYNKPSQEGMYAHFAAIAEATHLPVMLYNIPSRSVVNLSAETIVKLSYIPNITSLKEANGDLDHMVSVIEQTPDTFHLYSGDDSLTLPALSIGAKGVVSVASHIIGPEMQQMMMAFRGGDVEHAANLHRKLLPIMKGLFTAPNPTCVKAALQIKGFDTGGVRLPLVPPTSEQRQHLQFLIEQLKVS.

A pyruvate-binding site is contributed by threonine 46. Tyrosine 134 functions as the Proton donor/acceptor in the catalytic mechanism. Lysine 162 serves as the catalytic Schiff-base intermediate with substrate. Valine 204 serves as a coordination point for pyruvate.

The protein belongs to the DapA family. As to quaternary structure, homotetramer; dimer of dimers.

It localises to the cytoplasm. The enzyme catalyses L-aspartate 4-semialdehyde + pyruvate = (2S,4S)-4-hydroxy-2,3,4,5-tetrahydrodipicolinate + H2O + H(+). Its pathway is amino-acid biosynthesis; L-lysine biosynthesis via DAP pathway; (S)-tetrahydrodipicolinate from L-aspartate: step 3/4. Catalyzes the condensation of (S)-aspartate-beta-semialdehyde [(S)-ASA] and pyruvate to 4-hydroxy-tetrahydrodipicolinate (HTPA). In Halalkalibacterium halodurans (strain ATCC BAA-125 / DSM 18197 / FERM 7344 / JCM 9153 / C-125) (Bacillus halodurans), this protein is 4-hydroxy-tetrahydrodipicolinate synthase 2.